A 217-amino-acid chain; its full sequence is Probable transaldolase (217 aa).

The active-site Schiff-base intermediate with substrate is the Lys83.

It belongs to the transaldolase family. Type 3B subfamily.

It localises to the cytoplasm. The catalysed reaction is D-sedoheptulose 7-phosphate + D-glyceraldehyde 3-phosphate = D-erythrose 4-phosphate + beta-D-fructose 6-phosphate. It participates in carbohydrate degradation; pentose phosphate pathway; D-glyceraldehyde 3-phosphate and beta-D-fructose 6-phosphate from D-ribose 5-phosphate and D-xylulose 5-phosphate (non-oxidative stage): step 2/3. Transaldolase is important for the balance of metabolites in the pentose-phosphate pathway. This is Probable transaldolase from Caldicellulosiruptor saccharolyticus (strain ATCC 43494 / DSM 8903 / Tp8T 6331).